The sequence spans 324 residues: HTH-type transcriptional regulator CysB (324 aa).

The region spanning 1 to 59 (MKLQQLRYIVEVVNHNLNVSSTAEGLYTSQPGISKQVRMLEDELGIQIFARSGKHLTQV) is the HTH lysR-type domain. The H-T-H motif DNA-binding region spans 19–38 (VSSTAEGLYTSQPGISKQVR).

The protein belongs to the LysR transcriptional regulatory family. In terms of assembly, homotetramer.

The protein localises to the cytoplasm. Functionally, this protein is a positive regulator of gene expression for the cysteine regulon. The inducer for CysB is N-acetylserine. Thiosulfate and sulfide act as anti-inducers. In Klebsiella pneumoniae, this protein is HTH-type transcriptional regulator CysB (cysB).